The following is a 320-amino-acid chain: Beta-ketoacyl-[acyl-carrier-protein] synthase III (320 aa).

Residues C112 and H245 contribute to the active site. The ACP-binding stretch occupies residues 246 to 250 (QANIR). N275 is a catalytic residue.

This sequence belongs to the thiolase-like superfamily. FabH family. As to quaternary structure, homodimer.

Its subcellular location is the cytoplasm. The enzyme catalyses malonyl-[ACP] + acetyl-CoA + H(+) = 3-oxobutanoyl-[ACP] + CO2 + CoA. The protein operates within lipid metabolism; fatty acid biosynthesis. In terms of biological role, catalyzes the condensation reaction of fatty acid synthesis by the addition to an acyl acceptor of two carbons from malonyl-ACP. Catalyzes the first condensation reaction which initiates fatty acid synthesis and may therefore play a role in governing the total rate of fatty acid production. Possesses both acetoacetyl-ACP synthase and acetyl transacylase activities. Its substrate specificity determines the biosynthesis of branched-chain and/or straight-chain of fatty acids. This is Beta-ketoacyl-[acyl-carrier-protein] synthase III from Streptococcus thermophilus (strain CNRZ 1066).